Here is a 285-residue protein sequence, read N- to C-terminus: MPDKPSFQDLILRLHAFWSKAGCVILQPYDVEMGAGTFHPATTLRSLGRKPWRAAYVQPSRRPTDGRYGENPNRLQHYYQYQVIMKPSPETAQSMLLDSYRAIGIDPALHDIRFVEDDWESPTLGAWGLGWEVWCDGMEVGQFTYFQQVGGIPVDLPSFEMTYGLERLAMYVQDVENVYDLDFNGQGVTYGDVFLRAEREYSAHNFEHANTEMLSRHFIDAEKECAALVGQGLALPAYDQCIKASHLFNLLDARGVISVTERAAYIARVRSLAKSCAEAWLAGGG.

The protein belongs to the class-II aminoacyl-tRNA synthetase family. As to quaternary structure, tetramer of two alpha and two beta subunits.

It is found in the cytoplasm. It carries out the reaction tRNA(Gly) + glycine + ATP = glycyl-tRNA(Gly) + AMP + diphosphate. This Granulibacter bethesdensis (strain ATCC BAA-1260 / CGDNIH1) protein is Glycine--tRNA ligase alpha subunit.